A 417-amino-acid polypeptide reads, in one-letter code: Putative plant UBX domain-containing protein 14 (417 aa).

One can recognise a UBX domain in the interval 335–415; that stretch reads DRSVVCSICV…GIANSMISVT (81 aa).

This Arabidopsis thaliana (Mouse-ear cress) protein is Putative plant UBX domain-containing protein 14.